Here is a 258-residue protein sequence, read N- to C-terminus: Phosphate import ATP-binding protein PstB (258 aa).

The 242-residue stretch at 12 to 253 folds into the ABC transporter domain; sequence IEVKNLNFYY…PARKETEDYI (242 aa). Residue 44–51 participates in ATP binding; it reads GPSGCGKS.

The protein belongs to the ABC transporter superfamily. Phosphate importer (TC 3.A.1.7) family. The complex is composed of two ATP-binding proteins (PstB), two transmembrane proteins (PstC and PstA) and a solute-binding protein (PstS).

Its subcellular location is the cell inner membrane. The enzyme catalyses phosphate(out) + ATP + H2O = ADP + 2 phosphate(in) + H(+). Its function is as follows. Part of the ABC transporter complex PstSACB involved in phosphate import. Responsible for energy coupling to the transport system. This chain is Phosphate import ATP-binding protein PstB, found in Bordetella avium (strain 197N).